The sequence spans 159 residues: SsrA-binding protein (159 aa).

A disordered region spans residues 133-159 (KKLHDKRETSKERDWNRQKNRLLKERG). The segment covering 137-159 (DKRETSKERDWNRQKNRLLKERG) has biased composition (basic and acidic residues).

Belongs to the SmpB family.

Its subcellular location is the cytoplasm. In terms of biological role, required for rescue of stalled ribosomes mediated by trans-translation. Binds to transfer-messenger RNA (tmRNA), required for stable association of tmRNA with ribosomes. tmRNA and SmpB together mimic tRNA shape, replacing the anticodon stem-loop with SmpB. tmRNA is encoded by the ssrA gene; the 2 termini fold to resemble tRNA(Ala) and it encodes a 'tag peptide', a short internal open reading frame. During trans-translation Ala-aminoacylated tmRNA acts like a tRNA, entering the A-site of stalled ribosomes, displacing the stalled mRNA. The ribosome then switches to translate the ORF on the tmRNA; the nascent peptide is terminated with the 'tag peptide' encoded by the tmRNA and targeted for degradation. The ribosome is freed to recommence translation, which seems to be the essential function of trans-translation. The protein is SsrA-binding protein of Sinorhizobium medicae (strain WSM419) (Ensifer medicae).